Reading from the N-terminus, the 314-residue chain is MKRSHYFIAVPLTSEAKQAISRFSGDASSSLPFRTWVHEEDYHITLAFLGDVPPGKMAPLCEAMAAVAAKSAPFSLALAGLGTFGERTAPRIFWQGVKEEAALNELRRDVYEACLSLGFSLDRRPFAPHITIARKWQGEAPFQPEALRSLPAASTVFSVPEIVLYRTNMEKTPKYETIAAFPLLGAPDGRTGEGMGQLLKLRDYISRYETDVYHYVPEFIRLKQWQWEQAKARWEAERDADGARREPGETWDFLLDKPSWWERLIGRWRRGPEPEMDEERSPAPSLSRAATLDELKWQFLDDLFELQGMPAGRL.

H43 acts as the Proton donor in catalysis. 2 short sequence motifs (HXTX) span residues 43 to 46 and 129 to 132; these read HITL and HITI. The active-site Proton acceptor is the H129.

It belongs to the 2H phosphoesterase superfamily. ThpR family.

The catalysed reaction is a 3'-end 2',3'-cyclophospho-ribonucleotide-RNA + H2O = a 3'-end 2'-phospho-ribonucleotide-RNA + H(+). In terms of biological role, hydrolyzes RNA 2',3'-cyclic phosphodiester to an RNA 2'-phosphomonoester. This is RNA 2',3'-cyclic phosphodiesterase from Geobacillus stearothermophilus (Bacillus stearothermophilus).